Here is a 1149-residue protein sequence, read N- to C-terminus: Potassium channel subfamily U member 1 (1149 aa).

Topologically, residues 1 to 24 (MFQTKLRNETWEDLPKMSCTTEIQ) are extracellular. Residues 25-45 (AAFILSSFVTFFSGLIILLIF) traverse the membrane as a helical segment. Topologically, residues 46 to 101 (RLIWRSVKKWQIIKGTGIILELFTSGTIARSHVRSLHFQGQFRDHIEMLLSAQTFV) are cytoplasmic. A helical membrane pass occupies residues 102–122 (GQVLVILVFVLSIGSLIIYFI). The Extracellular portion of the chain corresponds to 123–138 (NSADPVGSCSSYEDKT). Residues 139 to 159 (IPIDLVFNAFFSFYFGLRFMA) form a helical membrane-spanning segment. Topologically, residues 160–163 (ADDK) are cytoplasmic. Residues 164–184 (IKFWLEMNSIVDIFTIPPTFI) form a helical membrane-spanning segment. The Extracellular portion of the chain corresponds to 185-188 (SYYL). Residues 189 to 209 (KSNWLGLRFLRALRLLELPQI) form a helical; Voltage-sensor membrane-spanning segment. Residues 210–226 (LQILRAIKTSNSVKFSK) are Cytoplasmic-facing. The helical transmembrane segment at 227-247 (LLSIILSTWFTAAGFIHLVEN) threads the bilayer. Topologically, residues 248 to 259 (SGDPWLKGRNSQ) are extracellular. The segment at residues 260-282 (NISYFESIYLVMATTSTVGFGDV) is an intramembrane region (pore-forming). The Selectivity for potassium motif lies at 276–279 (TVGF). The Extracellular portion of the chain corresponds to 283–291 (VAKTSLGRT). Residues 292–312 (FIMFFTLGSLILFANYIPEMV) form a helical membrane-spanning segment. Residues 313–1149 (ELFANKRKYT…EDPFAYSEPL (837 aa)) lie on the Cytoplasmic side of the membrane. RCK N-terminal domains are found at residues 331 to 473 (KKFI…DNII) and 713 to 884 (RNHI…EGSL). Disordered stretches follow at residues 828–854 (QIDSSSDPSPSVSEETPGYTNGHNEKS) and 1118–1149 (SQIPLGDNAKENERKTSDEVYDEDPFAYSEPL). Over residues 830–840 (DSSSDPSPSVS) the composition is skewed to low complexity. Over residues 1125–1135 (NAKENERKTSD) the composition is skewed to basic and acidic residues.

Belongs to the potassium channel family. Calcium-activated (TC 1.A.1.3) subfamily. KCa5.1/KCNU1 sub-subfamily. As to quaternary structure, homotetramer; which constitutes the activated potassium channel. Interacts with LRRC52; this interaction changes channel gating properties, such as shifting gating to more negative potentials at a given pH. As to expression, testis-specific.

It localises to the cell membrane. The protein resides in the cell projection. The protein localises to the cilium. Its subcellular location is the flagellum membrane. It catalyses the reaction K(+)(in) = K(+)(out). Regulated by changes in cytosolic pH; activated by alkalization. Activated by intracellular Ca(2+). Despite strong sequence similarity, human KCNU1 channels are significantly more sensitive to activation by internal Ca(2+) and less pH-sensitive than mouse KCNU1. VU0546110 acts as a selective inhibitor. The auxiliary subunit LRRC52 shifts the activation of KCNU1 to more negative potentials at a given pH. In terms of biological role, testis-specific potassium channel activated by both intracellular pH and membrane voltage that mediates export of K(+). Represents the primary spermatozoan K(+) current. The channel underlies a pH-triggered membrane hyperpolarization during the process of sperm capacitation, as sperm encounter the alkaline environment near the ovum in the female reproductive tract, thereby playing an essential for male fertility. The chain is Potassium channel subfamily U member 1 from Homo sapiens (Human).